Here is a 313-residue protein sequence, read N- to C-terminus: Olfactory receptor 2B6 (313 aa).

The Extracellular segment spans residues 1 to 25 (MNWVNDSIIQEFILLGFSDRPWLEF). N-linked (GlcNAc...) asparagine glycosylation is present at asparagine 5. A helical membrane pass occupies residues 26 to 49 (PLLVVFLISYTVTIFGNLTIILVS). Residues 50-57 (RLDTKLHT) are Cytoplasmic-facing. The helical transmembrane segment at 58-79 (PMYFFLTNLSLLDLCYTTCTVP) threads the bilayer. Residues 80-100 (QMLVNLCSIRKVISYRGCVAQ) lie on the Extracellular side of the membrane. A disulfide bridge links cysteine 97 with cysteine 189. A helical transmembrane segment spans residues 101 to 120 (LFIFLALGATEYLLLAVMSF). Residues 121–139 (DRFVAICRPLHYSVIMHQR) are Cytoplasmic-facing. A helical membrane pass occupies residues 140 to 158 (LCLQLAAASWVTGFSNSVW). Residues 159-195 (LSTLTLQLPLCDPYVIDHFLCEVPALLKLSCVETTAN) are Extracellular-facing. Residues 196-219 (EAELFLVSELFHLIPLTLILISYA) form a helical membrane-spanning segment. Over 220–236 (FIVRAVLRIQSAEGRQK) the chain is Cytoplasmic. The helical transmembrane segment at 237-259 (AFGTCGSHLIVVSLFYSTAVSVY) threads the bilayer. Residues 260–272 (LQPPSPSSKDQGK) lie on the Extracellular side of the membrane. The helical transmembrane segment at 273-292 (MVSLFYGIIAPMLNPLIYTL) threads the bilayer. Over 293–313 (RNKEVKEGFKRLVARVFLIKK) the chain is Cytoplasmic.

The protein belongs to the G-protein coupled receptor 1 family.

It is found in the cell membrane. Functionally, odorant receptor. In Homo sapiens (Human), this protein is Olfactory receptor 2B6.